The chain runs to 117 residues: Fluoride-specific ion channel FluC 2 (117 aa).

2 helical membrane passes run 1–21 (MISI…RSAI) and 46–66 (FLIG…AFFV). Positions 71 and 74 each coordinate Na(+). A helical transmembrane segment spans residues 95-115 (LFLNYSLLQFIIGFIACYIGY).

It belongs to the fluoride channel Fluc/FEX (TC 1.A.43) family.

The protein localises to the cell membrane. It catalyses the reaction fluoride(in) = fluoride(out). With respect to regulation, na(+) is not transported, but it plays an essential structural role and its presence is essential for fluoride channel function. Its function is as follows. Fluoride-specific ion channel. Important for reducing fluoride concentration in the cell, thus reducing its toxicity. This is Fluoride-specific ion channel FluC 2 from Staphylococcus aureus (strain Mu50 / ATCC 700699).